The following is a 318-amino-acid chain: Probable cell division protein WhiA (318 aa).

The H-T-H motif DNA-binding region spans 276 to 310 (TLQELGEMVESGSISKSGINHRLRKIDQIADKIRN).

The protein belongs to the WhiA family.

Its function is as follows. Involved in cell division and chromosome segregation. This is Probable cell division protein WhiA from Exiguobacterium sibiricum (strain DSM 17290 / CCUG 55495 / CIP 109462 / JCM 13490 / 255-15).